Consider the following 260-residue polypeptide: MALPEFSMRQLLEAGVHFGHQTQRWNPRMGPFIYGARNGIHIMDLTQTVPMLDQALQAIRDTVAKGGSILFVGTKRQAQQPIADAAEKCAQYYMNHRWLGGTLTNWQTVSQSINRLKAIDEQSERGFEGLTKKERLGMERDQGKLQASLGGIREMGGRPDLIFVIDVKKEALAVAEANKLGIPVVAVVDTNCAPDGIDYIIPGNDDASRAISLYCDLAARAALDGMSAQLGAAGVDLGAMEEAPVEEAVAAEAPAEEAQA.

It belongs to the universal ribosomal protein uS2 family.

In Roseobacter denitrificans (strain ATCC 33942 / OCh 114) (Erythrobacter sp. (strain OCh 114)), this protein is Small ribosomal subunit protein uS2.